Here is a 399-residue protein sequence, read N- to C-terminus: Zinc finger TRAF-type-containing protein 1 (399 aa).

The segment covering 1–13 (MSGAEEAGGGGPA) has biased composition (gly residues). Positions 1-20 (MSGAEEAGGGGPAAGPAGAV) are disordered. The RING-type; degenerate zinc-finger motif lies at 106–151 (CTVCLDLPKASVYQCTNGHLMCAGCFIHLLADARLKEEQATCPNCR). The TRAF-type zinc-finger motif lies at 152-210 (CEISKSLCCRNLAVEKAVSELPSECGFCLRQFPRSLLERHQKEECQDRVTQCKYKRIGC).

It belongs to the ZFTRAF1 family. In terms of assembly, interacts with LGALS3.

The protein resides in the cytoplasm. It localises to the perinuclear region. The chain is Zinc finger TRAF-type-containing protein 1 from Rattus norvegicus (Rat).